Here is a 508-residue protein sequence, read N- to C-terminus: ATP synthase subunit alpha, mitochondrial (508 aa).

ATP is bound at residue 171–178; the sequence is GDRQTGKT.

The protein belongs to the ATPase alpha/beta chains family. F-type ATPases have 2 components, CF(1) - the catalytic core - and CF(0) - the membrane proton channel. CF(1) has five subunits: alpha(3), beta(3), gamma(1), delta(1), epsilon(1). CF(0) has three main subunits: a, b and c.

It localises to the mitochondrion. The protein localises to the mitochondrion inner membrane. Its function is as follows. Mitochondrial membrane ATP synthase (F(1)F(0) ATP synthase or Complex V) produces ATP from ADP in the presence of a proton gradient across the membrane which is generated by electron transport complexes of the respiratory chain. F-type ATPases consist of two structural domains, F(1) - containing the extramembraneous catalytic core, and F(0) - containing the membrane proton channel, linked together by a central stalk and a peripheral stalk. During catalysis, ATP synthesis in the catalytic domain of F(1) is coupled via a rotary mechanism of the central stalk subunits to proton translocation. Subunits alpha and beta form the catalytic core in F(1). Rotation of the central stalk against the surrounding alpha(3)beta(3) subunits leads to hydrolysis of ATP in three separate catalytic sites on the beta subunits. Subunit alpha does not bear the catalytic high-affinity ATP-binding sites. The chain is ATP synthase subunit alpha, mitochondrial (ATPA) from Zea mays (Maize).